Here is an 81-residue protein sequence, read N- to C-terminus: Putative truncated GMC-type inactive oxidoreductase R833 (81 aa).

It belongs to the GMC oxidoreductase family.

This Acanthamoeba polyphaga mimivirus (APMV) protein is Putative truncated GMC-type inactive oxidoreductase R833.